A 149-amino-acid chain; its full sequence is Prefoldin subunit alpha (149 aa).

The protein belongs to the prefoldin subunit alpha family. In terms of assembly, heterohexamer of two alpha and four beta subunits.

The protein localises to the cytoplasm. Functionally, molecular chaperone capable of stabilizing a range of proteins. Seems to fulfill an ATP-independent, HSP70-like function in archaeal de novo protein folding. In Methanospirillum hungatei JF-1 (strain ATCC 27890 / DSM 864 / NBRC 100397 / JF-1), this protein is Prefoldin subunit alpha.